The sequence spans 237 residues: DCN1-like protein 5 (237 aa).

Phosphoserine occurs at positions 9, 41, and 48. A DCUN1 domain is found at 46 to 232 (FSSKKCLAWF…LLDEFVEWQK (187 aa)).

In terms of assembly, part of a complex that contains DCUN1D5, CUL1 and RBX1; this interaction is bridged by CUL1. Interacts (via the DCUN1 domain) with the unneddylated cullins: interacts with CUL1, CUL2, CUL3, CUL4A, CUL4B and CUL5; these interactions promote the cullin neddylation and the identity of the cullin dictates the affinity of the interaction. Interacts (via DCUN1 domain) with UBE2M (N-terminally acetylated form) and probably with UBE2F (N-terminally acetylated form). May also interact with regulators or subunits of cullin-RING ligases such as RBX1, RNF7, ELOB and DDB1; these interactions are bridged by cullins. Interacts with CAND1; this interaction is bridged by cullins and strongly inhibits the neddylation of cullins. These CAND-cullin-DCNL complexes can only be neddylated in the presence of a substrate adapter. Post-translationally, phosphorylation at Ser-41 is independent of cullin's interaction. Phosphorylated in response to both TICAM1 and MYD88 dependent Toll-like receptor (TLR) pathway activation. Phosphorylated in response to IL1B stimulation.

It localises to the nucleus. Its subcellular location is the cytoplasm. The protein localises to the cytoskeleton. The protein resides in the spindle. Functionally, contributes to the neddylation of all cullins by transferring NEDD8 from N-terminally acetylated NEDD8-conjugating E2s enzyme to different cullin C-terminal domain-RBX complexes which is necessary for the activation of cullin-RING E3 ubiquitin ligases (CRLs). May play a role in DNA damage response and may participate in cell proliferation and anchorage-independent cell growth. This Pongo abelii (Sumatran orangutan) protein is DCN1-like protein 5.